A 280-amino-acid polypeptide reads, in one-letter code: Nitrogenase iron protein (280 aa).

8 to 15 (GKGGIGKS) contributes to the ATP binding site. A [4Fe-4S] cluster-binding site is contributed by C95. At R98 the chain carries ADP-ribosylarginine; by dinitrogenase reductase ADP-ribosyltransferase. C128 provides a ligand contact to [4Fe-4S] cluster.

The protein belongs to the NifH/BchL/ChlL family. In terms of assembly, homodimer. [4Fe-4S] cluster serves as cofactor. In terms of processing, the reversible ADP-ribosylation of Arg-98 inactivates the nitrogenase reductase and regulates nitrogenase activity.

The enzyme catalyses N2 + 8 reduced [2Fe-2S]-[ferredoxin] + 16 ATP + 16 H2O = H2 + 8 oxidized [2Fe-2S]-[ferredoxin] + 2 NH4(+) + 16 ADP + 16 phosphate + 6 H(+). In terms of biological role, the key enzymatic reactions in nitrogen fixation are catalyzed by the nitrogenase complex, which has 2 components: the iron protein and the molybdenum-iron protein. This chain is Nitrogenase iron protein, found in Methanospirillum hungatei JF-1 (strain ATCC 27890 / DSM 864 / NBRC 100397 / JF-1).